A 2692-amino-acid chain; its full sequence is Thyroglobulin (2692 aa).

The signal sequence occupies residues 1–19 (MALALWVFALLGSACLVSA). Tyr-24 carries the iodotyrosine; alternate modification. A Sulfotyrosine; alternate modification is found at Tyr-24. Tyr-24 is modified (thyroxine; alternate). A Triiodothyronine; alternate modification is found at Tyr-24. 3 Thyroglobulin type-1 domains span residues 31–92 (LRPC…PVAC), 93–160 (LSFC…PARC), and 161–248 (PGSC…LAGT). Cystine bridges form between Cys-34/Cys-52, Cys-63/Cys-70, Cys-72/Cys-92, Cys-96/Cys-120, Cys-131/Cys-138, Cys-140/Cys-160, Cys-164/Cys-183, and Cys-194/Cys-235. Iodotyrosine is present on Tyr-108. N-linked (GlcNAc...) asparagine glycosylation is present at Asn-110. Residue Tyr-149 is modified to Iodotyrosine; alternate. Tyr-149 is subject to Diiodotyrosine; alternate. Asn-198 carries an N-linked (GlcNAc...) asparagine glycan. 2 positions are modified to iodotyrosine: Tyr-234 and Tyr-258. Residues 298-358 (PTKCEVERFA…TRRPSEPLSC (61 aa)) enclose the Thyroglobulin type-1 4 domain. Disulfide bonds link Cys-301/Cys-319, Cys-330/Cys-336, Cys-338/Cys-358, Cys-364/Cys-621, Cys-408/Cys-609, Cys-632/Cys-637, Cys-639/Cys-659, Cys-663/Cys-688, and Cys-699/Cys-704. Asn-485, Asn-497, and Asn-546 each carry an N-linked (GlcNAc...) asparagine glycan. Thyroglobulin type-1 domains follow at residues 606–659 (SQGC…RPRC), 660–727 (PTAC…PKQC), and 728–923 (PTPC…VPAC). Tyr-705 carries the iodotyrosine; alternate modification. Tyr-705 is subject to Thyroxine; alternate. Tyr-705 carries the post-translational modification Triiodothyronine; alternate. Residue Tyr-705 is modified to Diiodotyrosine; alternate. Disulfide bonds link Cys-706/Cys-727, Cys-731/Cys-764, Cys-775/Cys-900, Cys-902/Cys-923, Cys-927/Cys-1033, Cys-1044/Cys-1051, Cys-1053/Cys-1079, Cys-1128/Cys-1147, Cys-1151/Cys-1171, Cys-1183/Cys-1190, Cys-1192/Cys-1212, Cys-1237/Cys-1287, and Cys-1262/Cys-1278. Asn-749 carries an N-linked (GlcNAc...) asparagine glycan. Tyr-786 carries the post-translational modification Iodotyrosine. A glycan (N-linked (GlcNAc...) asparagine) is linked at Asn-855. An Iodotyrosine; alternate modification is found at Tyr-868. Position 868 is a diiodotyrosine; alternate (Tyr-868). The residue at position 885 (Tyr-885) is a Diiodotyrosine. An N-linked (GlcNAc...) asparagine glycan is attached at Asn-949. Tyr-994 carries the iodotyrosine; alternate modification. Position 994 is a diiodotyrosine; alternate (Tyr-994). Thyroglobulin type-1 domains are found at residues 1021-1079 (SGPL…PTPC), 1088-1147 (LSAW…SAPC), and 1148-1212 (PGLC…QPAC). N-linked (GlcNAc...) asparagine glycosylation occurs at Asn-1142. Position 1241 is an iodotyrosine (Tyr-1241). Tyr-1241 is subject to Thyroxine. Residues Asn-1296 and Asn-1384 are each glycosylated (N-linked (GlcNAc...) asparagine). Intrachain disulfides connect Cys-1372–Cys-1392, Cys-1395–Cys-1406, Cys-1409–Cys-1423, Cys-1426–Cys-1443, Cys-1447–Cys-1456, Cys-1476–Cys-1498, Cys-1535–Cys-1559, Cys-1539–Cys-1545, Cys-1571–Cys-1594, Cys-1656–Cys-1681, Cys-1660–Cys-1666, Cys-1665–Cys-1766, and Cys-1692–Cys-1709. Type II repeat units follow at residues 1389-1402 (PLGCVRCPEGSYFQ), 1403-1419 (EEQCIPCPAGFYQEQTG), and 1420-1436 (SLACAPCPAGTTTTSVG). Position 1400 is an iodotyrosine; alternate (Tyr-1400). Tyr-1400 is subject to Diiodotyrosine; alternate. Positions 1444-1498 (VTACQRDEAGLQCDQDGQYRASQRDRASGKAFCVDSEGRRLPWSETQAPLVDAQC) constitute a Thyroglobulin type-1 11 domain. One copy of the Type IIIA repeat lies at 1535-1655 (CLADCARDEA…GASLTEAHLF (121 aa)). A Type IIIB repeat occupies 1656–1823 (CLLACDRDSC…LFSLQQAHLW (168 aa)). Residue Asn-1800 is glycosylated (N-linked (GlcNAc...) asparagine). Cystine bridges form between Cys-1824-Cys-1850, Cys-1828-Cys-1835, Cys-1859-Cys-1870, Cys-1927-Cys-1955, Cys-1931-Cys-1937, Cys-1936-Cys-2007, Cys-1966-Cys-1979, Cys-2061-Cys-2085, Cys-2065-Cys-2071, and Cys-2094-Cys-2103. The stretch at 1824-1926 (CLSRCVQEPS…DKAISSGFFE (103 aa)) is one Type IIIA repeat. The stretch at 1927–2060 (CERLCDVDPC…VGDFSAARER (134 aa)) is one Type IIIB repeat. An N-linked (GlcNAc...) asparagine glycan is attached at Asn-1944. A Type IIIA repeat occupies 2061 to 2118 (CLLECSRHQACLVTTLQTRPGAVRCMFYADTQSCTHSLQAQNCQLLLREEATHIYRKP). Position 2115 is an iodotyrosine (Tyr-2115). Residues 2119–2692 (DIPLPGLGSS…PELASKSYSK (574 aa)) form a cholinesterase-like (ChEL) region. N-linked (GlcNAc...) asparagine glycosylation is found at Asn-2181 and Asn-2226. Tyr-2467 bears the Thyroxine mark. Tyr-2500 is modified (iodotyrosine; alternate). Tyr-2500 carries the post-translational modification Thyroxine; alternate. Tyr-2500 bears the Triiodothyronine; alternate mark. Tyr-2500 carries the post-translational modification Diiodotyrosine; alternate. Iodotyrosine is present on residues Tyr-2514 and Tyr-2544. A disulfide bridge connects residues Cys-2518 and Cys-2642. At Tyr-2624 the chain carries Diiodotyrosine. The span at 2658–2671 (EAEDGPLAESEEED) shows a compositional bias: acidic residues. Positions 2658 to 2692 (EAEDGPLAESEEEDRPGLTEDLLGLPELASKSYSK) are disordered. The residue at position 2690 (Tyr-2690) is an Iodotyrosine; alternate. At Tyr-2690 the chain carries Thyroxine; alternate. Tyr-2690 carries the triiodothyronine; alternate modification. The residue at position 2690 (Tyr-2690) is a Diiodotyrosine; alternate.

The protein belongs to the type-B carboxylesterase/lipase family. As to quaternary structure, monomer. Homodimer (via ChEL region); occurs in the endoplasmic reticulum and is required for export to the Golgi apparatus. Homooligomer; disulfide-linked; stored in this form in the thyroid follicle lumen. Iodinated on tyrosine residues by TPO. There are 4 pairs of iodinated tyrosines used for coupling: acceptor Tyr-24 is coupled to donor Tyr-149 or Tyr-234, acceptor Tyr-2500 is coupled to donor Tyr-2467, acceptor Tyr-2690 in monomer 1 is coupled to donor Tyr-2690 in monomer 2 and acceptor Tyr-1241 in monomer 1 is coupled to donor Tyr-108 in monomer 2. In terms of processing, sulfated tyrosines are desulfated during iodination. Post-translationally, undergoes sequential proteolysis by cathepsins to release thyroxine (T4) and triiodothyronine (T3) hormones. In the thyroid follicle lumen, cross-linked TG (storage form) is solubilized by limited proteolysis mediated by cathepsins CTSB and/or CTSL. Partially cleaved TG is further processed by CTSK/cathepsin K and/or CTSL resulting in the release of T4. Following endocytosis, further processing occurs leading to the release of T3 and more T4 hormones. In terms of tissue distribution, expressed in thyroid epithelial cells.

It localises to the secreted. Its function is as follows. Acts as a substrate for the production of iodinated thyroid hormones thyroxine (T4) and triiodothyronine (T3). The synthesis of T3 and T4 involves iodination of selected tyrosine residues of TG/thyroglobulin followed by their oxidative coupling. Following TG re-internalization and lysosomal-mediated proteolysis, T3 and T4 are released from the polypeptide backbone leading to their secretion into the bloodstream. One dimer produces 7 thyroid hormone molecules. In Sus scrofa (Pig), this protein is Thyroglobulin.